The following is a 314-amino-acid chain: Olfactory receptor 1E2 (314 aa).

The Extracellular portion of the chain corresponds to 1-25; that stretch reads MMGQNQTSISDFLLLGLPIQPEQQN. The N-linked (GlcNAc...) asparagine glycan is linked to N5. The helical transmembrane segment at 26 to 49 threads the bilayer; that stretch reads LCYALFLAMYLTTLLGNLLIIVLI. The Cytoplasmic portion of the chain corresponds to 50–57; sequence RLDSHLHT. Residues 58–79 form a helical membrane-spanning segment; it reads PMYLFLSNLSFSDLCFSSVTIP. Over 80 to 100 the chain is Extracellular; it reads KLLQNMQNQDPSIPYADCLTQ. C97 and C189 are joined by a disulfide. The helical transmembrane segment at 101 to 120 threads the bilayer; the sequence is MHFFLLFGDLESFLLVAMAY. Over 121–139 the chain is Cytoplasmic; that stretch reads DRYVAICFPLHYTAIMSPM. Residues 140 to 158 traverse the membrane as a helical segment; that stretch reads LCLSVVALSWVLTTFHAML. At 159–196 the chain is on the extracellular side; the sequence is HTLLMARLCFCADNVIPHFFCDMSALLKLACSDTRVNE. Residues 197-219 traverse the membrane as a helical segment; it reads WVIFIMGGLIVVIPFLLILGSYA. Residues 220–236 lie on the Cytoplasmic side of the membrane; sequence RIVSSILKVPSFKGICK. Residues 237–260 traverse the membrane as a helical segment; it reads ALSTCGSHLSVVSLFYGTVIGLYL. Residues 261–272 lie on the Extracellular side of the membrane; that stretch reads CPSANSSTLKDT. N-linked (GlcNAc...) asparagine glycosylation is present at N265. Residues 273-292 form a helical membrane-spanning segment; that stretch reads VMAMMYTVVTPMLNPFIYSL. The Cytoplasmic segment spans residues 293 to 314; it reads RNRDMKGALERVICKRKNPFLL.

Belongs to the G-protein coupled receptor 1 family.

The protein localises to the cell membrane. Odorant receptor. The sequence is that of Olfactory receptor 1E2 (OR1E2) from Pan troglodytes (Chimpanzee).